Consider the following 256-residue polypeptide: Nuclear shuttle protein (256 aa).

The tract at residues 1–53 is disordered; sequence MYPSRNKRGSYFNQRRQYSRNHVWKRPTAAKRHDWKRRPSNTSKPNDEPKMSA. Residues 17-39 are compositionally biased toward basic residues; the sequence is QYSRNHVWKRPTAAKRHDWKRRP. The Bipartite nuclear localization signal signature appears at 21–42; the sequence is NHVWKRPTAAKRHDWKRRPSNT. Positions 81 to 96 match the Nuclear localization signal motif; that stretch reads DLGRSEPNRSRSYIRL. The tract at residues 150-187 is interaction with Arabidopsis thaliana NSI protein; that stretch reads ELFGARIHSHGNLSVTPALKDRYYIRHVCKRVLSVEKD.

Belongs to the begomovirus nuclear shuttle protein family. In terms of assembly, binds to single-stranded and double-stranded viral DNA. Interacts with the host nuclear shuttle interacting (NSI) protein. This interaction may allow NSP to recruit NSI monomers to the viral genome and thus regulate nuclear export of viral genome by NSP.

It is found in the host nucleus. The protein resides in the host cytoplasm. Its subcellular location is the host cell membrane. Binds to the genomic viral ssDNA, shuttles it into and out of the cell nucleus. Begomoviruses use 2 proteins to transport their DNA from cell to cell. The nuclear shuttle protein (NSP) shuttles it between nucleus and cytoplasm and the movement protein (MP) probably transports the DNA-NSP complex to the cell periphery and facilitates movement across the cell wall. This chain is Nuclear shuttle protein, found in Abutilon mosaic virus (isolate West India) (AbMV).